We begin with the raw amino-acid sequence, 199 residues long: GTP cyclohydrolase 1 (199 aa).

Cys-89, His-92, and Cys-161 together coordinate Zn(2+).

This sequence belongs to the GTP cyclohydrolase I family. In terms of assembly, homomer.

The catalysed reaction is GTP + H2O = 7,8-dihydroneopterin 3'-triphosphate + formate + H(+). It participates in cofactor biosynthesis; 7,8-dihydroneopterin triphosphate biosynthesis; 7,8-dihydroneopterin triphosphate from GTP: step 1/1. The sequence is that of GTP cyclohydrolase 1 from Bifidobacterium longum (strain DJO10A).